Here is a 791-residue protein sequence, read N- to C-terminus: Protein CLASP-2 (791 aa).

3 stretches are compositionally biased toward low complexity: residues 259–271, 323–334, and 372–381; these read ASDA…SVNS, RTPNTRPMTTRT, and SQPGSRNGSP. Disordered regions lie at residues 259-283, 315-391, and 422-454; these read ASDA…SKLS, TRMT…TGTL, and AMNT…PQKS. A compositionally biased stretch (polar residues) spans 422–434; sequence AMNTAKESLGQPS.

This sequence belongs to the CLASP family. In terms of assembly, interacts with hcp-1 and hcp-2.

Its subcellular location is the cytoplasm. It localises to the cytoskeleton. The protein resides in the microtubule organizing center. It is found in the centrosome. The protein localises to the chromosome. Its subcellular location is the centromere. It localises to the kinetochore. The protein resides in the spindle. Its function is as follows. Probable microtubule plus-end tracking protein that promotes the stabilization of dynamic microtubules. Required for the formation of mitotic and meiotic spindles. Specifically promotes the polymerization of kinetochore-bound microtubules. Also required for cytoplasmic streaming. The sequence is that of Protein CLASP-2 (cls-2) from Caenorhabditis briggsae.